The sequence spans 251 residues: Maleate isomerase (251 aa).

Substrate contacts are provided by residues N15, 81–83 (CLV), Y138, and N168. The active-site Nucleophile is the C81. C81 bears the S-(2-succinyl)cysteine mark. C199 acts as the Proton donor in catalysis. 200–201 (VQ) is a substrate binding site.

It belongs to the maleate isomerase family. In terms of assembly, homodimer.

It carries out the reaction maleate = fumarate. Catalyzes cis-trans isomerization of the C2-C3 double bond in maleate to yield fumarate. This chain is Maleate isomerase, found in Geobacillus stearothermophilus (Bacillus stearothermophilus).